The primary structure comprises 1853 residues: DNA-directed RNA polymerase II subunit RPB1 (1853 aa).

Cys66, Cys69, Cys76, His79, Cys106, Cys109, Cys149, and Cys177 together coordinate Zn(2+). Positions 256–268 are lid loop; it reads PAVVTFGSAKNQD. Positions 314–331 are rudder loop; sequence NCIPGLPTATQKGGRPLK. Asp489, Asp491, and Asp493 together coordinate Mg(2+). A bridging helix region spans residues 827-839; that stretch reads PSEFFFHAMGGRE. Residue Lys1260 forms a Glycyl lysine isopeptide (Lys-Gly) (interchain with G-Cter in ubiquitin) linkage. Disordered stretches follow at residues 1520 to 1568 and 1589 to 1853; these read PWSP…PRTP and SPHY…DPQN. 2 stretches are compositionally biased toward low complexity: residues 1589-1811 and 1821-1853; these read SPHY…TPSP and YSPSSPTYSPSSPTYSPASPSYSPSSPTYDPQN. Tandem repeats lie at residues 1592-1598, 1599-1605, 1616-1622, 1623-1629, 1630-1636, 1637-1643, 1644-1650, 1651-1657, 1658-1664, 1665-1671, 1679-1685, 1686-1692, 1693-1699, 1700-1706, 1707-1713, 1717-1723, 1724-1730, 1731-1737, 1752-1758, 1759-1765, 1779-1785, 1786-1792, 1800-1806, 1821-1827, 1828-1834, and 1842-1848. Residues 1592–1848 are C-terminal domain (CTD); 26 X 7 AA approximate tandem repeats of Y-[ST]-P-[ST]-S-P-[AGKNQRST]; sequence YSPTSPSYSP…SPSYSPSSPT (257 aa).

The protein belongs to the RNA polymerase beta' chain family. In terms of assembly, component of the RNA polymerase II (Pol II) complex consisting of 12 subunits. Interacts with sig-7. In terms of processing, the tandem 7 residues repeats in the C-terminal domain (CTD) can be highly phosphorylated. The phosphorylation activates Pol II. Phosphorylation occurs mainly at residues 'Ser-2' and 'Ser-5' of the heptapeptide repeat and starts at the 3- to 4-cell embryonic stage. This phosphorylation also occurs in the early stages of oocyte development and is not detected in oocytes arrested at the meiotic diakinesis stage. In the somatic lineage, phosphorylation at 'Ser-2' is mediated by cdk-12 downstream of cdk-9 whereas in the germline lineage cdk-12 phosphorylates 'Ser-2' independently of cdk-9. Phosphorylation is likely mediated by cdk-7. May be dephosphorylated by fcp-1 in diakinetic oocytes and in 1-cell and 2-cell embryos. Dephosphorylated at 'Ser-5' of the heptapeptide repeat by ssup-72. The phosphorylation state is believed to result from the balanced action of site-specific CTD kinases and phosphatase, and a 'CTD code' that specifies the position of Pol II within the transcription cycle has been proposed. Post-translationally, following transcription stress, the elongating form of RNA polymerase II (RNA pol IIo) is polyubiquitinated via 'Lys-63'-linkages on Lys-1260 at DNA damage sites without leading to degradation: ubiquitination promotes RNA pol IIo backtracking to allow access by the transcription-coupled nucleotide excision repair (TC-NER) machinery. Subsequent DEF1-dependent polyubiquitination by the elongin complex via 'Lys-48'-linkages may lead to proteasome-mediated degradation; presumably at stalled RNA pol II where TC-NER has failed, to halt global transcription and enable 'last resort' DNA repair pathways.

Its subcellular location is the nucleus. It localises to the chromosome. The catalysed reaction is RNA(n) + a ribonucleoside 5'-triphosphate = RNA(n+1) + diphosphate. Its function is as follows. DNA-dependent RNA polymerase catalyzes the transcription of DNA into RNA using the four ribonucleoside triphosphates as substrates. Largest and catalytic component of RNA polymerase II which synthesizes mRNA precursors and many functional non-coding RNAs. Forms the polymerase active center together with the second largest subunit. Pol II is the central component of the basal RNA polymerase II transcription machinery. It is composed of mobile elements that move relative to each other. RPB1 is part of the core element with the central large cleft, the clamp element that moves to open and close the cleft and the jaws that are thought to grab the incoming DNA template. At the start of transcription, a single-stranded DNA template strand of the promoter is positioned within the central active site cleft of Pol II. A bridging helix emanates from RPB1 and crosses the cleft near the catalytic site and is thought to promote translocation of Pol II by acting as a ratchet that moves the RNA-DNA hybrid through the active site by switching from straight to bent conformations at each step of nucleotide addition. During transcription elongation, Pol II moves on the template as the transcript elongates. Elongation is influenced by the phosphorylation status of the C-terminal domain (CTD) of Pol II largest subunit (RPB1), which serves as a platform for assembly of factors that regulate transcription initiation, elongation, termination and mRNA processing. Involved in the transcription of several genes including those involved in embryogenesis. The sequence is that of DNA-directed RNA polymerase II subunit RPB1 from Caenorhabditis briggsae.